Here is a 350-residue protein sequence, read N- to C-terminus: Ion-translocating oxidoreductase complex subunit D (350 aa).

3 consecutive transmembrane segments (helical) span residues 20–39, 89–109, and 123–143; these read IMMLVTLATVPGIAVQWYFF, IPPLAPWWMVVLGTAFAVIIA, and PAMIGYVVLLISFPVQMTNWL. The residue at position 187 (threonine 187) is an FMN phosphoryl threonine. 5 consecutive transmembrane segments (helical) span residues 215–235, 244–264, 267–287, 301–321, and 322–342; these read LAGLGWQWVNLAYLAGGLFLL, IPVSFLVTLAVCSTLGWLIAP, FLSPLMHLLSGATMLGAFFIL, LVFGALVGLLVWLIRSFGGYP, and DGVAFAVLLANITVPLIDYYT.

The protein belongs to the NqrB/RnfD family. The complex is composed of six subunits: RnfA, RnfB, RnfC, RnfD, RnfE and RnfG. FMN is required as a cofactor.

The protein resides in the cell inner membrane. Its function is as follows. Part of a membrane-bound complex that couples electron transfer with translocation of ions across the membrane. This Cronobacter sakazakii (strain ATCC BAA-894) (Enterobacter sakazakii) protein is Ion-translocating oxidoreductase complex subunit D.